Reading from the N-terminus, the 228-residue chain is Cytidylate kinase (228 aa).

17–25 (GPTASGKGT) is a binding site for ATP.

It belongs to the cytidylate kinase family. Type 1 subfamily.

Its subcellular location is the cytoplasm. The catalysed reaction is CMP + ATP = CDP + ADP. The enzyme catalyses dCMP + ATP = dCDP + ADP. The protein is Cytidylate kinase of Burkholderia ambifaria (strain MC40-6).